The following is a 213-amino-acid chain: mRNA-decapping protein D9 (213 aa).

Residues 30-209 form the Nudix hydrolase domain; the sequence is KDTHVFAACI…EYLSYIYNML (180 aa). A Nudix box motif is present at residues 111 to 132; sequence GKLDKKESIKDCLRRELKEESD. A Mg(2+)-binding site is contributed by glutamate 117. Glutamate 126 acts as the Nucleophile in catalysis. 2 residues coordinate Mg(2+): glutamate 130 and aspartate 151.

It belongs to the Nudix hydrolase family. Mg(2+) serves as cofactor. Mn(2+) is required as a cofactor.

In terms of biological role, decapping enzyme required for the removal of the 5'-end m7GpppN cap tethered to viral and host mRNAs to allow their decay in cells. May therefore accelerate viral and cellular mRNA turnover to eliminate competing host mRNAs and allow stage-specific synthesis of viral proteins. Acceleration of the turnover of cellular transcripts may even promote the shutoff of host protein synthesis. Does not cleave unmethylated RNAs or RNAs shorter than 24 nucleotides. This is mRNA-decapping protein D9 from Homo sapiens (Human).